The following is a 431-amino-acid chain: UDP-N-acetylglucosamine 1-carboxyvinyltransferase (431 aa).

24–25 (KN) is a binding site for phosphoenolpyruvate. R95 is a binding site for UDP-N-acetyl-alpha-D-glucosamine. D119 acts as the Proton donor in catalysis. UDP-N-acetyl-alpha-D-glucosamine-binding residues include D314 and M336.

Belongs to the EPSP synthase family. MurA subfamily.

It localises to the cytoplasm. It catalyses the reaction phosphoenolpyruvate + UDP-N-acetyl-alpha-D-glucosamine = UDP-N-acetyl-3-O-(1-carboxyvinyl)-alpha-D-glucosamine + phosphate. It functions in the pathway cell wall biogenesis; peptidoglycan biosynthesis. In terms of biological role, cell wall formation. Adds enolpyruvyl to UDP-N-acetylglucosamine. This Bradyrhizobium diazoefficiens (strain JCM 10833 / BCRC 13528 / IAM 13628 / NBRC 14792 / USDA 110) protein is UDP-N-acetylglucosamine 1-carboxyvinyltransferase.